Here is a 305-residue protein sequence, read N- to C-terminus: Probable lipid kinase YegS-like (305 aa).

The region spanning 1–129 is the DAGKc domain; that stretch reads MTQRRAMLIL…VDLGEVGGKL (129 aa). Residues Thr39, 65-71, and Thr92 contribute to the ATP site; that span reads GDGTLRD. Mg(2+) contacts are provided by Leu210, Asp213, and Leu215. Glu268 acts as the Proton acceptor in catalysis.

This sequence belongs to the diacylglycerol/lipid kinase family. YegS lipid kinase subfamily. The cofactor is Mg(2+). Ca(2+) is required as a cofactor.

It is found in the cytoplasm. In terms of biological role, probably phosphorylates lipids; the in vivo substrate is unknown. The protein is Probable lipid kinase YegS-like of Pseudomonas syringae pv. syringae (strain B728a).